The sequence spans 56 residues: Large ribosomal subunit protein bL33 (56 aa).

This sequence belongs to the bacterial ribosomal protein bL33 family.

In Ehrlichia ruminantium (strain Gardel), this protein is Large ribosomal subunit protein bL33.